The primary structure comprises 222 residues: Phosphate-specific transport system accessory protein PhoU homolog 1 (222 aa).

Belongs to the PhoU family. Homodimer.

The protein localises to the cytoplasm. Functionally, plays a role in the regulation of phosphate uptake. This is Phosphate-specific transport system accessory protein PhoU homolog 1 (phoU1) from Mycobacterium leprae (strain TN).